The primary structure comprises 176 residues: Pituitary adenylate cyclase-activating polypeptide (176 aa).

An N-terminal signal peptide occupies residues 1–24; the sequence is MTMCSGARLALLVYGILMHSSVYG. The propeptide occupies 25 to 80; that stretch reads SPAASGLRFPGIRPENEVYDEDGNPQQDFYDSESLGVGSPASALRDAYALYYPAEE. Positions 98-135 are disordered; it reads QPSARRSPADAHGQGLGWDPGGSADDDSEPLSKRHSDG. The important for receptor binding stretch occupies residues 150–158; that stretch reads VKKYLAAVL. Leu158 is modified (leucine amide). Position 169 is a lysine amide (Lys169). A propeptide spanning residues 173 to 176 is cleaved from the precursor; the sequence is IPYL.

The protein belongs to the glucagon family. Interacts with ADCYAP1R1 (via N-terminal extracellular domain); both PACAP27 and PACAP38 neuropeptides function as ligand for the ADCYAP1R1 receptor, which modulates the activity of downstream effectors. Interacts with VIPR1 and VIPR2; functions as ligand for VIPR1 and VIPR2 receptors, which modulate the activity of downstream effectors.

It is found in the secreted. Functionally, PACAP is a neuropeptide involved in diverse array of physiological processes through activating the PACAP subfamily of class B1 G protein-coupled receptors: VIP receptor 1 (VIPR1), VIP receptor 2 (VIPR2), and PACAP type I receptor (ADCYAP1R1). Exerts neuroprotective and general cytoprotective effects due to anti-apoptotic, anti-inflammatory, and antioxidant actions. Promotes neuron projection development through the RAPGEF2/Rap1/B-Raf/ERK pathway. In chromaffin cells, induces long-lasting increase of intracellular calcium concentrations and neuroendocrine secretion. Involved in the control of glucose homeostasis, induces insulin secretion by pancreatic beta cells. PACAP exists in two bioactive forms from proteolysis of the same precursor protein, PACAP27 and PACAP38, which differ by eleven amino acid residues in the C-terminus. The polypeptide is Pituitary adenylate cyclase-activating polypeptide (ADCYAP1) (Bos taurus (Bovine)).